We begin with the raw amino-acid sequence, 95 residues long: Large ribosomal subunit protein bL25 (95 aa).

This sequence belongs to the bacterial ribosomal protein bL25 family. As to quaternary structure, part of the 50S ribosomal subunit; part of the 5S rRNA/L5/L18/L25 subcomplex. Contacts the 5S rRNA. Binds to the 5S rRNA independently of L5 and L18.

Its function is as follows. This is one of the proteins that binds to the 5S RNA in the ribosome where it forms part of the central protuberance. In Actinobacillus pleuropneumoniae serotype 5b (strain L20), this protein is Large ribosomal subunit protein bL25.